A 559-amino-acid polypeptide reads, in one-letter code: Protein NRT1/ PTR FAMILY 2.8 (559 aa).

The next 11 helical transmembrane spans lie at 57–77, 92–112, 132–152, 178–198, 206–226, 321–341, 374–394, 404–424, 437–457, 481–501, and 529–549; these read GVFLVNVINIWFGSCNILTLA, LLLGSIASFIGMGIFALTAAL, KWQLGVLFSGLGLLAIGAGGV, FFNWWYFSFTVALVIALTGVV, WVIGFVIPTACLALSITTFVI, LKCVTAILPVWVTGIACFILT, VSMITLAIWISLYECVIIPIV, LTLKHRIEIVMGIICMIVAGF, GSFVSPVSIVMLLPQFALAGL, VAGAIFFLSSSIASYICTLLI, and YFFIIAGIQVANLLYFRLFAS.

Belongs to the major facilitator superfamily. Proton-dependent oligopeptide transporter (POT/PTR) (TC 2.A.17) family. Expressed in flowers.

Its subcellular location is the membrane. The polypeptide is Protein NRT1/ PTR FAMILY 2.8 (NPF2.8) (Arabidopsis thaliana (Mouse-ear cress)).